The primary structure comprises 473 residues: Levansucrase (473 aa).

Residues 1-29 (MNIKKFAKQATVLTFTTALLAGGATQAFA) form the signal peptide. Sucrose is bound by residues tryptophan 85, aspartate 86, and serine 164. The active-site Nucleophile is aspartate 86. Aspartate 241 contributes to the Ca(2+) binding site. Residues arginine 246 and aspartate 247 each coordinate sucrose. The Ca(2+) site is built by glutamine 272, leucine 308, asparagine 310, and aspartate 339. Glutamate 340 is a binding site for sucrose. Glutamate 342 acts as the Proton donor/acceptor in catalysis. Arginine 360 is a binding site for sucrose.

This sequence belongs to the glycosyl hydrolase 68 family. As to quaternary structure, monomer.

The protein localises to the secreted. It carries out the reaction [6)-beta-D-fructofuranosyl-(2-&gt;](n) alpha-D-glucopyranoside + sucrose = [6)-beta-D-fructofuranosyl-(2-&gt;](n+1) alpha-D-glucopyranoside + D-glucose. With respect to regulation, ca(2+) may play an important structural role and promote stability of levansucrase. The enzyme concentration is a factor defining the molecular weight (MW) levan distribution. A bimodal distribution is reported at the usual enzyme concentrations. At low concentrations, the enzyme synthesizes high MW levan, and at high concentrations, it synthesizes low MW levan. In terms of biological role, catalyzes the synthesis of levan, a fructose polymer, by transferring the fructosyl moiety from sucrose to a growing acceptor molecule. Also displays sucrose hydrolase activity. At low sucrose concentrations, functions as an hydrolase with water as acceptor, whereas at higher substrate concentrations it adds fructosyl units to a growing levan chain. This Bacillus subtilis (strain 168) protein is Levansucrase.